The primary structure comprises 1343 residues: MSPLETNPLSPETAMREPAETSTTEEQASTPHAADEKKILSDLSAPSSTTATPADKEHRPKSSSSNNAVSVNEVDALIAHLPEDERQVLKTQLEEIKVNISFFGLWRYATKMDILIMVISTICAIAAGAALPLFTAPSTFQRIMLYQISYDEFYDELTKNVLYFVYLGIGEFVTVYVSTVGFIYTGEHATQKIREYYLESILRQNIGYFDKLGAGEVTTRITADTNLIQDGISEKVGLTLTALATFVTAFIIAYVKYWKLALICSSTIVALVLTMGGGSQFIIKYSKKSLDSYGAGGTVAEEVISSIRNATAFGTQDKLAKQYEVHLDEAEKWGTKNQIVMGFMIGAMFGLMYSNYGLGFWMGSRFLVDGAVDVGDILTVLMAILIGSFSLGNVSPNAQAFTNAVAAAAKIFGTIDRQSPLDPYSNEGKTLDHFEGHIELRNVKHIYPSRPEVTVMEDVSLSMPAGKTTALVGPSGSGKSTVVGLVERFYMPVRGTVLLDGHDIKDLNLRWLRQQISLVSQEPVLFGTTIYKNIRHGLIGTKYENESEDKVRELIENAAKMANAHDFITALPEGYETNVGQRGFLLSGGQKQRIAIARAVVSDPKILLLDEATSALDTKSEGVVQAALERAAEGRTTIVIAHRLSTIKTAHNIVVLVNGKIAEQGTHDELVDRGGAYRKLVEAQRINEQKEADALEDADAEDLTNADIAKIKTASSASSDLDGKPTTIDRTGTHKSVSSAILSKRPPETTPKYSLWTLLKFVASFNRPEIPYMLIGLVFSVLAGGGQPTQAVLYAKAISTLSLPESQYSKLRHDADFWSLMFFVVGIIQFITQSTNGAAFAVCSERLIRRARSTAFRTILRQDIAFFDKEENSTGALTSFLSTETKHLSGVSGVTLGTILMTSTTLGAAIIIALAIGWKLALVCISVVPVLLACGFYRFYMLAQFQSRSKLAYEGSANFACEATSSIRTVASLTRERDVWEIYHAQLDAQGRTSLISVLRSSLLYASSQALVFFCVALGFWYGGTLLGHHEYDIFRFFVCFSEILFGAQSAGTVFSFAPDMGKAKNAAAEFRRLFDRKPQIDNWSEEGEKLETVEGEIEFRNVHFRYPTRPEQPVLRGLDLTVKPGQYVALVGPSGCGKSTTIALLERFYDAIAGSILVDGKDISKLNINSYRSFLSLVSQEPTLYQGTIKENILLGIVEDDVPEEFLIKACKDANIYDFIMSLPEGFNTVVGSKGGMLSGGQKQRVAIARALLRDPKILLLDEATSALDSESEKVVQAALDAAARGRTTIAVAHRLSTIQKADVIYVFDQGKIVESGTHSELVQKKGRYYELVNLQSLGKGH.

The span at 1-10 (MSPLETNPLS) shows a compositional bias: polar residues. The interval 1-67 (MSPLETNPLS…HRPKSSSSNN (67 aa)) is disordered. Residues 20-31 (ETSTTEEQASTP) are compositionally biased toward low complexity. A glycan (N-linked (GlcNAc...) asparagine) is linked at Asn-99. 4 helical membrane passes run 114 to 134 (ILIMVISTICAIAAGAALPLF), 163 to 183 (YFVYLGIGEFVTVYVSTVGFI), 235 to 255 (KVGLTLTALATFVTAFIIAYV), and 263 to 283 (ICSSTIVALVLTMGGGSQFII). In terms of domain architecture, ABC transmembrane type-1 1 spans 115-403 (LIMVISTICA…VSPNAQAFTN (289 aa)). N-linked (GlcNAc...) asparagine glycosylation occurs at Asn-309. Helical transmembrane passes span 339-359 (IVMGFMIGAMFGLMYSNYGLG) and 366-386 (FLVDGAVDVGDILTVLMAILI). Residues 438–683 (IELRNVKHIY…GGAYRKLVEA (246 aa)) enclose the ABC transporter 1 domain. 473-480 (GPSGSGKS) provides a ligand contact to ATP. Residue Asn-545 is glycosylated (N-linked (GlcNAc...) asparagine). 2 consecutive transmembrane segments (helical) span residues 773 to 793 (MLIGLVFSVLAGGGQPTQAVL) and 820 to 840 (LMFFVVGIIQFITQSTNGAAF). Residues 774–1063 (LIGLVFSVLA…VFSFAPDMGK (290 aa)) form the ABC transmembrane type-1 2 domain. Asn-872 carries an N-linked (GlcNAc...) asparagine glycan. 4 helical membrane passes run 887–907 (HLSGVSGVTLGTILMTSTTLG), 920–942 (LALVCISVVPVLLACGFYRFYML), 1010–1030 (ALVFFCVALGFWYGGTLLGHH), and 1037–1057 (FFVCFSEILFGAQSAGTVFSF). Asn-1083 carries an N-linked (GlcNAc...) asparagine glycan. In terms of domain architecture, ABC transporter 2 spans 1098–1336 (IEFRNVHFRY…KGRYYELVNL (239 aa)). 1133–1140 (GPSGCGKS) is a binding site for ATP.

Belongs to the ABC transporter superfamily. ABCB family. Multidrug resistance exporter (TC 3.A.1.201) subfamily.

It is found in the cell membrane. With respect to regulation, fenamirol efflux transporter activity is inhibited by the cyclosporin derivative PSC 833, nigericin, reserpine and valinomycin. The effect of reserpine is transiant, while that of the cyclosporin derivative PSC 833, nigericin and valinomycin is proportional to the time of exposure. Cyclohexinmide has inhibitory effect only when applied prior to addition of the fungicide. Its function is as follows. Pleiotropic ABC efflux transporter involved in the protection of the cells against a wide range of toxic compounds. Confers resistance to the azole fenarimol via efflux transport. May also be involved in the secretion of penicillin. The protein is ABC multidrug transporter atrD of Emericella nidulans (strain FGSC A4 / ATCC 38163 / CBS 112.46 / NRRL 194 / M139) (Aspergillus nidulans).